Consider the following 220-residue polypeptide: Deoxyribose-phosphate aldolase 2 (220 aa).

Aspartate 89 acts as the Proton donor/acceptor in catalysis. Residue lysine 151 is the Schiff-base intermediate with acetaldehyde of the active site. Lysine 180 functions as the Proton donor/acceptor in the catalytic mechanism.

Belongs to the DeoC/FbaB aldolase family. DeoC type 1 subfamily.

Its subcellular location is the cytoplasm. It carries out the reaction 2-deoxy-D-ribose 5-phosphate = D-glyceraldehyde 3-phosphate + acetaldehyde. The protein operates within carbohydrate degradation; 2-deoxy-D-ribose 1-phosphate degradation; D-glyceraldehyde 3-phosphate and acetaldehyde from 2-deoxy-alpha-D-ribose 1-phosphate: step 2/2. Catalyzes a reversible aldol reaction between acetaldehyde and D-glyceraldehyde 3-phosphate to generate 2-deoxy-D-ribose 5-phosphate. In Staphylococcus aureus (strain MSSA476), this protein is Deoxyribose-phosphate aldolase 2.